We begin with the raw amino-acid sequence, 422 residues long: Imidazolonepropionase (422 aa).

Residues His-82 and His-84 each contribute to the Fe(3+) site. Residues His-82 and His-84 each contribute to the Zn(2+) site. 4-imidazolone-5-propanoate-binding residues include Arg-91, Tyr-154, and His-187. Tyr-154 is a binding site for N-formimidoyl-L-glutamate. Residue His-252 coordinates Fe(3+). Residue His-252 coordinates Zn(2+). Residue Glu-255 coordinates 4-imidazolone-5-propanoate. Asp-327 lines the Fe(3+) pocket. Asp-327 provides a ligand contact to Zn(2+). N-formimidoyl-L-glutamate contacts are provided by Asn-329 and Gly-331. Position 332 (Ser-332) interacts with 4-imidazolone-5-propanoate.

It belongs to the metallo-dependent hydrolases superfamily. HutI family. The cofactor is Zn(2+). Fe(3+) is required as a cofactor.

It localises to the cytoplasm. It catalyses the reaction 4-imidazolone-5-propanoate + H2O = N-formimidoyl-L-glutamate. It participates in amino-acid degradation; L-histidine degradation into L-glutamate; N-formimidoyl-L-glutamate from L-histidine: step 3/3. Functionally, catalyzes the hydrolytic cleavage of the carbon-nitrogen bond in imidazolone-5-propanoate to yield N-formimidoyl-L-glutamate. It is the third step in the universal histidine degradation pathway. This chain is Imidazolonepropionase, found in Alkaliphilus metalliredigens (strain QYMF).